Here is an 86-residue protein sequence, read N- to C-terminus: Small ribosomal subunit protein bS16 (86 aa).

It belongs to the bacterial ribosomal protein bS16 family.

This Borreliella burgdorferi (strain ATCC 35210 / DSM 4680 / CIP 102532 / B31) (Borrelia burgdorferi) protein is Small ribosomal subunit protein bS16.